The following is a 194-amino-acid chain: Probable GTP-binding protein EngB (194 aa).

Positions 23–194 constitute an EngB-type G domain; the sequence is DKMEFAFVGR…LNFMEEKLNN (172 aa). GTP is bound by residues 31 to 38, 58 to 62, 76 to 79, 142 to 145, and 173 to 175; these read GRSNVGKS, GRTQL, DLPG, TKID, and HSS. Mg(2+) is bound by residues S38 and T60.

This sequence belongs to the TRAFAC class TrmE-Era-EngA-EngB-Septin-like GTPase superfamily. EngB GTPase family. Mg(2+) is required as a cofactor.

In terms of biological role, necessary for normal cell division and for the maintenance of normal septation. In Fusobacterium nucleatum subsp. nucleatum (strain ATCC 25586 / DSM 15643 / BCRC 10681 / CIP 101130 / JCM 8532 / KCTC 2640 / LMG 13131 / VPI 4355), this protein is Probable GTP-binding protein EngB.